A 217-amino-acid polypeptide reads, in one-letter code: Cytidylate kinase (217 aa).

9 to 17 (GPAGSGKTT) contacts ATP.

The protein belongs to the cytidylate kinase family. Type 1 subfamily.

The protein resides in the cytoplasm. It carries out the reaction CMP + ATP = CDP + ADP. The catalysed reaction is dCMP + ATP = dCDP + ADP. This Thermosipho melanesiensis (strain DSM 12029 / CIP 104789 / BI429) protein is Cytidylate kinase.